A 717-amino-acid polypeptide reads, in one-letter code: Glycine--tRNA ligase beta subunit (717 aa).

It belongs to the class-II aminoacyl-tRNA synthetase family. In terms of assembly, tetramer of two alpha and two beta subunits.

The protein resides in the cytoplasm. The enzyme catalyses tRNA(Gly) + glycine + ATP = glycyl-tRNA(Gly) + AMP + diphosphate. This Gloeothece citriformis (strain PCC 7424) (Cyanothece sp. (strain PCC 7424)) protein is Glycine--tRNA ligase beta subunit.